Here is a 252-residue protein sequence, read N- to C-terminus: PF03932 family protein CutC (252 aa).

Belongs to the CutC family.

The protein localises to the cytoplasm. In Sodalis glossinidius (strain morsitans), this protein is PF03932 family protein CutC.